The sequence spans 50 residues: Small ribosomal subunit protein uS14 (50 aa).

C15, C18, C33, and C36 together coordinate Zn(2+).

This sequence belongs to the universal ribosomal protein uS14 family. Zinc-binding uS14 subfamily. In terms of assembly, part of the 30S ribosomal subunit. The cofactor is Zn(2+).

Functionally, binds 16S rRNA, required for the assembly of 30S particles. The protein is Small ribosomal subunit protein uS14 of Methanococcoides burtonii (strain DSM 6242 / NBRC 107633 / OCM 468 / ACE-M).